The following is a 572-amino-acid chain: Proline--tRNA ligase (572 aa).

The protein belongs to the class-II aminoacyl-tRNA synthetase family. ProS type 1 subfamily. As to quaternary structure, homodimer.

The protein localises to the cytoplasm. It catalyses the reaction tRNA(Pro) + L-proline + ATP = L-prolyl-tRNA(Pro) + AMP + diphosphate. Catalyzes the attachment of proline to tRNA(Pro) in a two-step reaction: proline is first activated by ATP to form Pro-AMP and then transferred to the acceptor end of tRNA(Pro). As ProRS can inadvertently accommodate and process non-cognate amino acids such as alanine and cysteine, to avoid such errors it has two additional distinct editing activities against alanine. One activity is designated as 'pretransfer' editing and involves the tRNA(Pro)-independent hydrolysis of activated Ala-AMP. The other activity is designated 'posttransfer' editing and involves deacylation of mischarged Ala-tRNA(Pro). The misacylated Cys-tRNA(Pro) is not edited by ProRS. The sequence is that of Proline--tRNA ligase from Serratia proteamaculans (strain 568).